Reading from the N-terminus, the 44-residue chain is Antibacterial protein 2 homolog (44 aa).

This sequence belongs to the staphylococcal hemolytic protein family.

Its subcellular location is the secreted. In terms of biological role, has hemolytic activity and also inhibits the growth of gonococci. The chain is Antibacterial protein 2 homolog from Staphylococcus haemolyticus (strain JCSC1435).